Consider the following 262-residue polypeptide: 14-3-3-like protein A (262 aa).

The tract at residues D240–S262 is disordered. Basic and acidic residues predominate over residues D247–S262.

It belongs to the 14-3-3 family.

This chain is 14-3-3-like protein A, found in Hordeum vulgare (Barley).